Here is a 241-residue protein sequence, read N- to C-terminus: Anti-Pycsar protein Apyc1 (241 aa).

The segment at 17–215 (DNNNALLEQD…SVQKKTWLMH (199 aa)) is beta-lactamase-like. The Zn(2+) site is built by H59, H61, D63, H64, H142, D162, and H215.

The protein belongs to the nuclease anti-Pycsar protein Apyc1 family. As to quaternary structure, homodimer. It depends on Zn(2+) as a cofactor.

The enzyme catalyses 3',5'-cyclic CMP + H2O = CMP + H(+). It catalyses the reaction 3',5'-cyclic UMP + H2O = UMP + H(+). Counteracts the endogenous Pycsar antiviral defense system. Phosphodiesterase that enables metal-dependent hydrolysis of host cyclic nucleotide Pycsar defense signals such as cCMP and cUMP. The sequence is that of Anti-Pycsar protein Apyc1 from Paenibacillus harenae.